The following is a 214-amino-acid chain: Holliday junction branch migration complex subunit RuvA (214 aa).

Residues 1–63 (MISSLRGTVL…EDSLTLFGFP (63 aa)) are domain I. A domain II region spans residues 64-139 (GPDELRAFEL…KLFVTQPRAR (76 aa)). The interval 139–143 (RSATS) is flexible linker. Residues 144–214 (AASTVTADVV…AAPTGQAADR (71 aa)) are domain III.

This sequence belongs to the RuvA family. Homotetramer. Forms an RuvA(8)-RuvB(12)-Holliday junction (HJ) complex. HJ DNA is sandwiched between 2 RuvA tetramers; dsDNA enters through RuvA and exits via RuvB. An RuvB hexamer assembles on each DNA strand where it exits the tetramer. Each RuvB hexamer is contacted by two RuvA subunits (via domain III) on 2 adjacent RuvB subunits; this complex drives branch migration. In the full resolvosome a probable DNA-RuvA(4)-RuvB(12)-RuvC(2) complex forms which resolves the HJ.

The protein localises to the cytoplasm. Its function is as follows. The RuvA-RuvB-RuvC complex processes Holliday junction (HJ) DNA during genetic recombination and DNA repair, while the RuvA-RuvB complex plays an important role in the rescue of blocked DNA replication forks via replication fork reversal (RFR). RuvA specifically binds to HJ cruciform DNA, conferring on it an open structure. The RuvB hexamer acts as an ATP-dependent pump, pulling dsDNA into and through the RuvAB complex. HJ branch migration allows RuvC to scan DNA until it finds its consensus sequence, where it cleaves and resolves the cruciform DNA. The protein is Holliday junction branch migration complex subunit RuvA of Clavibacter michiganensis subsp. michiganensis (strain NCPPB 382).